We begin with the raw amino-acid sequence, 241 residues long: Uridylate kinase (241 aa).

An ATP-binding site is contributed by 12–15; sequence KLSG. The tract at residues 20–25 is involved in allosteric activation by GTP; it reads GDKGVG. Residue Gly54 coordinates UMP. Residues Gly55 and Arg59 each contribute to the ATP site. UMP-binding positions include Asp74 and 135–142; that span reads IGSPYFST. 3 residues coordinate ATP: Asn163, Tyr169, and Asp172.

This sequence belongs to the UMP kinase family. In terms of assembly, homohexamer.

It is found in the cytoplasm. It catalyses the reaction UMP + ATP = UDP + ADP. Its pathway is pyrimidine metabolism; CTP biosynthesis via de novo pathway; UDP from UMP (UMPK route): step 1/1. Its activity is regulated as follows. Allosterically activated by GTP. Inhibited by UTP. In terms of biological role, catalyzes the reversible phosphorylation of UMP to UDP. The polypeptide is Uridylate kinase (Streptococcus gordonii (strain Challis / ATCC 35105 / BCRC 15272 / CH1 / DL1 / V288)).